A 309-amino-acid polypeptide reads, in one-letter code: Zinc-finger homeodomain protein 5 (309 aa).

Residues 1–16 (MDMRSHEMIERRREDN) are compositionally biased toward basic and acidic residues. Residues 1-21 (MDMRSHEMIERRREDNGNNNG) are disordered. Residues 76 to 125 (YRECLKNHAASVGGSVHDGCGEFMPSGEEGTIEALRCAACDCHRNFHRKE) form a ZF-HD dimerization-type; degenerate zinc finger. Residues 240-303 (KKRFRTKFTT…NNKNNAKKPP (64 aa)) constitute a DNA-binding region (homeobox).

In terms of assembly, homo- and heterodimer with other ZFHD proteins. Interacts with MIF1, MIF2 and MIF3; these interactions prevent nuclear localization and DNA-binding to inhibit transcription regulation activity. Binds to ZHD1, ZHD2, ZHD4, ZHD10 and ZHD11. Mostly expressed in flowers and inflorescence.

It localises to the nucleus. Functionally, putative transcription factor. Binds DNA at 5'-ATTA-3' consensus promoter regions. Regulates floral architecture and leaf development. Regulators in the abscisic acid (ABA) signal pathway that confers sensitivity to ABA in an ARF2-dependent manner. This Arabidopsis thaliana (Mouse-ear cress) protein is Zinc-finger homeodomain protein 5 (ZHD5).